The primary structure comprises 345 residues: RDS/peripherin-like protein xRDS36 (345 aa).

Residues 1 to 24 (MVLFKAKFSFQRRVKLAQTLWLLS) lie on the Cytoplasmic side of the membrane. The helical transmembrane segment at 25 to 43 (WLSVLVGCLTFGMGIFLKV) threads the bilayer. Residues 44 to 61 (QLWIHNEVMDNTTAHAVP) are Lumenal-facing. Asparagine 54 is a glycosylation site (N-linked (GlcNAc...) asparagine). The chain crosses the membrane as a helical span at residues 62–80 (NTVITAGLVGILLGYFAGK). The Cytoplasmic portion of the chain corresponds to 81 to 99 (ISQASMDLTKYQRWKSFMM). Residues 100–123 (PFFFLAILSCIVCLAALVLSVALR) form a helical membrane-spanning segment. Residues 124-264 (GTLEESLKIG…LGYYTGIMAT (141 aa)) lie on the Lumenal side of the membrane. Residue asparagine 229 is glycosylated (N-linked (GlcNAc...) asparagine). A helical transmembrane segment spans residues 265-290 (NGAAVTLSFLLQASVLVSLRYVQTSM). The Cytoplasmic portion of the chain corresponds to 291 to 345 (DKIRDPDDVEADTEGFLLEKGVMETVNSSLEKIKDLFKSNQVETAEGGGEGAAGS).

Belongs to the PRPH2/ROM1 family. Homodimer; disulfide-linked. Rod specific.

It localises to the membrane. The sequence is that of RDS/peripherin-like protein xRDS36 (rds36) from Xenopus laevis (African clawed frog).